We begin with the raw amino-acid sequence, 445 residues long: Phosphoglucosamine mutase (445 aa).

The Phosphoserine intermediate role is filled by serine 102. Mg(2+)-binding residues include serine 102, aspartate 241, aspartate 243, and aspartate 245. Position 102 is a phosphoserine (serine 102).

It belongs to the phosphohexose mutase family. Mg(2+) is required as a cofactor. Activated by phosphorylation.

It carries out the reaction alpha-D-glucosamine 1-phosphate = D-glucosamine 6-phosphate. Catalyzes the conversion of glucosamine-6-phosphate to glucosamine-1-phosphate. The polypeptide is Phosphoglucosamine mutase (Shewanella pealeana (strain ATCC 700345 / ANG-SQ1)).